Consider the following 488-residue polypeptide: Probable cytosol aminopeptidase (488 aa).

Positions 251 and 256 each coordinate Mn(2+). Residue lysine 263 is part of the active site. 3 residues coordinate Mn(2+): aspartate 274, aspartate 333, and glutamate 335. Arginine 337 is a catalytic residue.

This sequence belongs to the peptidase M17 family. Mn(2+) is required as a cofactor.

Its subcellular location is the cytoplasm. The enzyme catalyses Release of an N-terminal amino acid, Xaa-|-Yaa-, in which Xaa is preferably Leu, but may be other amino acids including Pro although not Arg or Lys, and Yaa may be Pro. Amino acid amides and methyl esters are also readily hydrolyzed, but rates on arylamides are exceedingly low.. It carries out the reaction Release of an N-terminal amino acid, preferentially leucine, but not glutamic or aspartic acids.. Functionally, presumably involved in the processing and regular turnover of intracellular proteins. Catalyzes the removal of unsubstituted N-terminal amino acids from various peptides. The chain is Probable cytosol aminopeptidase from Cenarchaeum symbiosum (strain A).